Reading from the N-terminus, the 204-residue chain is MIGRVTGILVEKQAPEILLDVQGVGYELLLPMTSFYNLPEVGQETTLFTHFVVREDAHLLFGFSHKQDRSLFRELIKTNGVGPKLALAILSAMSVNEFVYAIEQEELSKLVKIPGVGKKTAERLLVELKGKFKGLQQTDFFIKSSHLPGIKCSKLDQSLQLDEAVSALIALGYKPIEAEKMVKKVLKADLTSEQLIREALKAAL.

The interval 1 to 64 (MIGRVTGILV…EDAHLLFGFS (64 aa)) is domain I. The tract at residues 65-143 (HKQDRSLFRE…GLQQTDFFIK (79 aa)) is domain II. Positions 144-155 (SSHLPGIKCSKL) are flexible linker. The interval 156–204 (DQSLQLDEAVSALIALGYKPIEAEKMVKKVLKADLTSEQLIREALKAAL) is domain III.

Belongs to the RuvA family. In terms of assembly, homotetramer. Forms an RuvA(8)-RuvB(12)-Holliday junction (HJ) complex. HJ DNA is sandwiched between 2 RuvA tetramers; dsDNA enters through RuvA and exits via RuvB. An RuvB hexamer assembles on each DNA strand where it exits the tetramer. Each RuvB hexamer is contacted by two RuvA subunits (via domain III) on 2 adjacent RuvB subunits; this complex drives branch migration. In the full resolvosome a probable DNA-RuvA(4)-RuvB(12)-RuvC(2) complex forms which resolves the HJ.

It localises to the cytoplasm. Its function is as follows. The RuvA-RuvB-RuvC complex processes Holliday junction (HJ) DNA during genetic recombination and DNA repair, while the RuvA-RuvB complex plays an important role in the rescue of blocked DNA replication forks via replication fork reversal (RFR). RuvA specifically binds to HJ cruciform DNA, conferring on it an open structure. The RuvB hexamer acts as an ATP-dependent pump, pulling dsDNA into and through the RuvAB complex. HJ branch migration allows RuvC to scan DNA until it finds its consensus sequence, where it cleaves and resolves the cruciform DNA. This Histophilus somni (strain 2336) (Haemophilus somnus) protein is Holliday junction branch migration complex subunit RuvA.